Consider the following 210-residue polypeptide: Thymidylate kinase (210 aa).

10-17 (GGEGAGKS) serves as a coordination point for ATP.

The protein belongs to the thymidylate kinase family.

It catalyses the reaction dTMP + ATP = dTDP + ADP. Phosphorylation of dTMP to form dTDP in both de novo and salvage pathways of dTTP synthesis. This Magnetococcus marinus (strain ATCC BAA-1437 / JCM 17883 / MC-1) protein is Thymidylate kinase.